The primary structure comprises 1170 residues: Disease resistance protein LAZ5 (1170 aa).

Residues 10–172 (ESWQVFINFR…KIIDSIKKVL (163 aa)) form the TIR domain. Glu84 is an active-site residue. The segment at 193 to 219 (EAKNVDTFSPNSSDFPSTSIDDDLSIN) is disordered. Residues 198–219 (DTFSPNSSDFPSTSIDDDLSIN) show a composition bias toward polar residues. Residues 261–513 (RLKEMEEKLD…DVACFFKSEN (253 aa)) enclose the NB-ARC domain. 12 LRR repeats span residues 595–616 (MENV…TFDG), 622–645 (MCNL…IFKF), 646–670 (DTVR…PWEK), 677–700 (PENL…VKDT), 723–747 (AKNL…MENM), 761–785 (LTCL…KLEE), 790–813 (SENL…AGDL), 815–837 (RLVV…LGKQ), 838–861 (KALQ…VKDM), 862–885 (KHLR…SLKC), 888–904 (LSRN…LKDF), and 905–930 (SNLK…CLEY).

It catalyses the reaction NAD(+) + H2O = ADP-D-ribose + nicotinamide + H(+). TIR-NB-LRR receptor-like protein that may play a role in plant innate immunity. May trigger hypersensitive programmed cell death in response to pathogen attack. Involved in tolerance to tobacco ringspot virus (TRSV). The chain is Disease resistance protein LAZ5 from Arabidopsis thaliana (Mouse-ear cress).